The sequence spans 111 residues: Protein BEX5 (111 aa).

A compositionally biased stretch (basic and acidic residues) spans 1–12; sequence MENVPKENKVVE. Residues 1–37 form a disordered region; it reads MENVPKENKVVEKAPVQNEAPALGGGEYQEPGGNVKG. The interval 100–104 is his cluster; sequence HHDHH. C108 provides a ligand contact to Zn(2+).

It belongs to the BEX family. Ubiquitinated. Degraded by the proteasome.

Its subcellular location is the cytoplasm. The polypeptide is Protein BEX5 (BEX5) (Homo sapiens (Human)).